Here is a 163-residue protein sequence, read N- to C-terminus: Crossover junction endodeoxyribonuclease RuvC (163 aa).

Residues D9, E76, and D148 contribute to the active site. Mg(2+) is bound by residues D9, E76, and D148.

Belongs to the RuvC family. Homodimer which binds Holliday junction (HJ) DNA. The HJ becomes 2-fold symmetrical on binding to RuvC with unstacked arms; it has a different conformation from HJ DNA in complex with RuvA. In the full resolvosome a probable DNA-RuvA(4)-RuvB(12)-RuvC(2) complex forms which resolves the HJ. Requires Mg(2+) as cofactor.

The protein resides in the cytoplasm. The catalysed reaction is Endonucleolytic cleavage at a junction such as a reciprocal single-stranded crossover between two homologous DNA duplexes (Holliday junction).. Its function is as follows. The RuvA-RuvB-RuvC complex processes Holliday junction (HJ) DNA during genetic recombination and DNA repair. Endonuclease that resolves HJ intermediates. Cleaves cruciform DNA by making single-stranded nicks across the HJ at symmetrical positions within the homologous arms, yielding a 5'-phosphate and a 3'-hydroxyl group; requires a central core of homology in the junction. The consensus cleavage sequence is 5'-(A/T)TT(C/G)-3'. Cleavage occurs on the 3'-side of the TT dinucleotide at the point of strand exchange. HJ branch migration catalyzed by RuvA-RuvB allows RuvC to scan DNA until it finds its consensus sequence, where it cleaves and resolves the cruciform DNA. This is Crossover junction endodeoxyribonuclease RuvC from Trichodesmium erythraeum (strain IMS101).